Reading from the N-terminus, the 173-residue chain is MPLNIEDKKAVVAEVSAQVAKAQTIVVAEYRGIAVGDLTKLRATARQQGVYLRVLKNTLARRAVEGTPFAGLAEQMTGPLIYGISEDAVASAKVLNDFAKTNDKLVLRAGSYDGKVLDVNAVKALASIPSRDELIAQLLGVMQAPVSGFARLLGALAAKKSEGAPAEAEAPAA.

It belongs to the universal ribosomal protein uL10 family. As to quaternary structure, part of the ribosomal stalk of the 50S ribosomal subunit. The N-terminus interacts with L11 and the large rRNA to form the base of the stalk. The C-terminus forms an elongated spine to which L12 dimers bind in a sequential fashion forming a multimeric L10(L12)X complex.

In terms of biological role, forms part of the ribosomal stalk, playing a central role in the interaction of the ribosome with GTP-bound translation factors. The chain is Large ribosomal subunit protein uL10 from Cupriavidus pinatubonensis (strain JMP 134 / LMG 1197) (Cupriavidus necator (strain JMP 134)).